Consider the following 463-residue polypeptide: MPAMSQNPPLLRPDLAPAPIFDTSRREGQPTIGMVSLGCPKALVDSERILTRLRAEGYAISPDYKGAGAVIVNTCGFLDSAKAESLQAIGEALAENGKVIVTGCLGAEPEYITGAHPSVLAVTGPQQYEQVLDAVHHAVPPSPDPFVDLLPASGVKLTPRHYSYLKISEGCNHACKFCIIPDMRGKLVSRPAHAVIREAEKLVEAGVRELLVISQDTSAYGLDRKFATERGHRAHITDLARDLGQLGAWVRLHYVYPYPHVRDLIPLMAAHGESGGLVLPYLDIPFQHAHPDVLKRMARPAAAARTLDEIAAWRAVCPDITLRSTFIVGYPGETEAEFQTLLDWLDEAQLDRVGCFQYENVKGARANDLPDHVPDDVKQDRWDRFMQKAQAISEAKLAAKVGHRIEVIVDAVDGDGATCRTKADAPEIDGNLFIDEGFEDLAPGDIVSVTVDEAGEYDLWGRL.

Positions 1-26 are disordered; the sequence is MPAMSQNPPLLRPDLAPAPIFDTSRR. Positions 8–19 are enriched in low complexity; sequence PPLLRPDLAPAP. Positions 30–140 constitute an MTTase N-terminal domain; the sequence is PTIGMVSLGC…VLDAVHHAVP (111 aa). Positions 39, 75, 104, 171, 175, and 178 each coordinate [4Fe-4S] cluster. A Radical SAM core domain is found at 157–395; the sequence is LTPRHYSYLK…MQKAQAISEA (239 aa). One can recognise a TRAM domain in the interval 398 to 463; the sequence is AAKVGHRIEV…AGEYDLWGRL (66 aa).

Belongs to the methylthiotransferase family. RimO subfamily. Requires [4Fe-4S] cluster as cofactor.

Its subcellular location is the cytoplasm. It catalyses the reaction L-aspartate(89)-[ribosomal protein uS12]-hydrogen + (sulfur carrier)-SH + AH2 + 2 S-adenosyl-L-methionine = 3-methylsulfanyl-L-aspartate(89)-[ribosomal protein uS12]-hydrogen + (sulfur carrier)-H + 5'-deoxyadenosine + L-methionine + A + S-adenosyl-L-homocysteine + 2 H(+). Catalyzes the methylthiolation of an aspartic acid residue of ribosomal protein uS12. The sequence is that of Ribosomal protein uS12 methylthiotransferase RimO from Paracoccus denitrificans (strain Pd 1222).